Here is a 28-residue protein sequence, read N- to C-terminus: Somatostatin-2 (28 aa).

Cys-17 and Cys-28 are joined by a disulfide.

This sequence belongs to the somatostatin family.

Its subcellular location is the secreted. Its function is as follows. Somatostatin inhibits the release of somatotropin. The chain is Somatostatin-2 (sst2) from Oreochromis niloticus (Nile tilapia).